The primary structure comprises 114 residues: uncharacterized protein (114 aa).

The HIT domain maps to 6-114 (IFGKIIRREI…GGRSLAWPPG (109 aa)). Residues 98-102 (HLHIH) carry the Histidine triad motif motif.

This is an uncharacterized protein from Synechococcus elongatus (strain ATCC 33912 / PCC 7942 / FACHB-805) (Anacystis nidulans R2).